The following is an 823-amino-acid chain: Zygotic DNA replication licensing factor mcm6 (823 aa).

The C4-type zinc-finger motif lies at 159–186 (CLDCQTLVRDVEQQFKYTQPSICRNPVC). An MCM domain is found at 347–554 (LYHNLCTSLF…TDYAIARRIV (208 aa)). Residue 397–404 (GDPSTAKS) coordinates ATP. The Arginine finger motif lies at 529–532 (SRFD). A disordered region spans residues 666–713 (NLDQEDEHEAEEEPQEVINGDASVPSGVNGHVNGMNGHAEEPNAATPK). The segment covering 667 to 680 (LDQEDEHEAEEEPQ) has biased composition (acidic residues). Residues 692 to 702 (GVNGHVNGMNG) show a composition bias toward low complexity.

The protein belongs to the MCM family. As to quaternary structure, component of the mcm2-7 complex (RLF-M). The complex forms a toroidal hexameric ring with the proposed subunit order mcm2-mcm6-mcm4-mcm7-mcm3-mcm5. Begins to associate with zmcm3, mcm4 and mcm7 into mcm complexes at the neurula stage.

Its subcellular location is the nucleus. The enzyme catalyses ATP + H2O = ADP + phosphate + H(+). Functionally, acts as a component of the mcm2-7 complex (mcm complex) which is the putative replicative helicase essential for 'once per cell cycle' DNA replication initiation and elongation in eukaryotic cells. The active ATPase sites in the mcm2-7 ring are formed through the interaction surfaces of two neighboring subunits such that a critical structure of a conserved arginine finger motif is provided in trans relative to the ATP-binding site of the Walker A box of the adjacent subunit. The six ATPase active sites, however, are likely to contribute differentially to the complex helicase activity. The existence of maternal and zygotic forms of mcm3 and mcm6 suggests that specific forms of mcm2-7 complexes may be used during different stages of development. May replace mmcm6 in the mcm2-7 complex. This chain is Zygotic DNA replication licensing factor mcm6, found in Xenopus tropicalis (Western clawed frog).